Consider the following 323-residue polypeptide: 8-oxo-dGDP phosphatase NUDT18 (323 aa).

The 131-residue stretch at 37–167 (RLRKNVCYVV…DVLHLVELGA (131 aa)) folds into the Nudix hydrolase domain. Leucine 58 lines the Mg(2+) pocket. The Nudix box signature appears at 76 to 97 (GRMEPGETIVEAMQREVKEEAG).

The protein belongs to the Nudix hydrolase family. The cofactor is Mn(2+). Mg(2+) is required as a cofactor.

The enzyme catalyses 8-oxo-dGDP + H2O = 8-oxo-dGMP + phosphate + H(+). The catalysed reaction is 8-oxo-dADP + H2O = 8-oxo-dAMP + phosphate + H(+). It carries out the reaction 2-oxo-dADP + H2O = 2-oxo-dAMP + phosphate + H(+). It catalyses the reaction 8-oxo-GDP + H2O = 8-oxo-GMP + phosphate + H(+). Functionally, mediates the hydrolysis of oxidized nucleoside diphosphate derivatives. Hydrolyzes 8-oxo-7,8-dihydroguanine (8-oxo-Gua)-containing deoxyribo- and ribonucleoside diphosphates to the monophosphates. Hydrolyzes 8-oxo-dGDP and 8-oxo-GDP with the same efficiencies. Also hydrolyzes 8-OH-dADP and 2-OH-dADP. Exhibited no or minimal hydrolysis activity against 8-oxo-dGTP, 8-oxo-GTP, dGTP, GTP, dGDP and GDP. Probably removes oxidized guanine nucleotides from both the DNA and RNA precursor pools. This is 8-oxo-dGDP phosphatase NUDT18 from Mus musculus (Mouse).